Consider the following 61-residue polypeptide: ERMES regulator 1 (61 aa).

Residues 1–20 (MLPNLRRIFASFRTEEEERS) are Mitochondrial intermembrane-facing. Residues 21 to 43 (YSRKAFFHLIGYITCSVLFSWLV) traverse the membrane as a helical segment. Residues 44–61 (RKKVISSPVVSSPIHALS) are Cytoplasmic-facing.

Belongs to the EMR1 family. In terms of assembly, interacts with the ER-mitochondria encounter structure (ERMES) complex. Interacts with mdm12. Interacts with mdm34.

The protein resides in the mitochondrion outer membrane. Its function is as follows. Mediates the formation of endoplasmic reticulum (ER)-mitochondria encounter structure (ERMES) foci, thereby contributing to the formation of ER-mitochondrial contact sites. The chain is ERMES regulator 1 from Schizosaccharomyces pombe (strain 972 / ATCC 24843) (Fission yeast).